A 185-amino-acid polypeptide reads, in one-letter code: Ribosome-recycling factor (185 aa).

The protein belongs to the RRF family.

It is found in the cytoplasm. Responsible for the release of ribosomes from messenger RNA at the termination of protein biosynthesis. May increase the efficiency of translation by recycling ribosomes from one round of translation to another. This chain is Ribosome-recycling factor, found in Symbiobacterium thermophilum (strain DSM 24528 / JCM 14929 / IAM 14863 / T).